Consider the following 357-residue polypeptide: Phosphate acyltransferase (357 aa).

It belongs to the PlsX family. Homodimer. Probably interacts with PlsY.

Its subcellular location is the cytoplasm. It catalyses the reaction a fatty acyl-[ACP] + phosphate = an acyl phosphate + holo-[ACP]. It functions in the pathway lipid metabolism; phospholipid metabolism. Functionally, catalyzes the reversible formation of acyl-phosphate (acyl-PO(4)) from acyl-[acyl-carrier-protein] (acyl-ACP). This enzyme utilizes acyl-ACP as fatty acyl donor, but not acyl-CoA. This is Phosphate acyltransferase from Herminiimonas arsenicoxydans.